The following is a 219-amino-acid chain: MSRMPFDRQKIVEAVKEAKARAKPRNFTQSVEVAVNLKDIDLKRPENRFKLEVVLPHGRGKDVKIAVIADGAVAEAARRLGLDVISSAELEEIAQSPRQARKLAKKYDFFIAEAPLMPKIGRYLGKYLGPRNKMPVVVPPTMSNLEPIVEKLKKTVRIQLKNNPVVHAPVGTEKMSDEEIAENIETVLNAIIGKLERGESQIKSVYVKTTMGPAVKVKG.

The protein belongs to the universal ribosomal protein uL1 family. Part of the 50S ribosomal subunit.

Its function is as follows. Binds directly to 23S rRNA. Probably involved in E site tRNA release. Protein L1 is also a translational repressor protein, it controls the translation of its operon by binding to its mRNA. The sequence is that of Large ribosomal subunit protein uL1 from Pyrococcus abyssi (strain GE5 / Orsay).